Here is a 458-residue protein sequence, read N- to C-terminus: MYESVDVVGLTPSPNPFLSMDYYHQNRGCLIPDKGLVSGAARGFRNPHWSGSNHSVETQSTSSEEIVPSPPSPPPPPRVYKPCFVCQDKSSGYHYGVSACEGCKGFFRRSIQKNMVYTCHREKSCIINKVTRNRCQYCRLQKCLEVGMSKESVRNDRNKRKKDDKKQECLENYVLSPDTEKMIEQVRKAHQETFPSLCQLGKYTTNNSADHRVALDVDLWDKFSELSTKCIIKTVEFAKQLPGFTTLTIADQITLLKAACLDILILRICTRYTPDQDTMTFSDGLTLNRTQMHNAGFGPLTDLVFAFANQLLPLEMDDAETGLLSAICLLCGDRQDLEQSDKVDELQEPLLEALKIYVRNRRPHKPHMFPKMLMKITDLRSISAKGAERVITLKMEIPGSMPPLIQEMLENSEGLEGGGSKGAGGGGGGGGGKGAPPGSCSPSLSPSSAHSSPSAHSP.

The modulating stretch occupies residues 1-79; that stretch reads MYESVDVVGL…PPSPPPPPRV (79 aa). Residues 48–75 form a disordered region; it reads HWSGSNHSVETQSTSSEEIVPSPPSPPP. Residues 49–64 show a composition bias toward polar residues; it reads WSGSNHSVETQSTSSE. The nuclear receptor DNA-binding region spans 80-155; that stretch reads YKPCFVCQDK…VGMSKESVRN (76 aa). 2 NR C4-type zinc fingers span residues 83 to 103 and 119 to 138; these read CFVC…CEGC and CHRE…CQYC. The interval 156–177 is hinge; it reads DRNKRKKDDKKQECLENYVLSP. The NR LBD domain maps to 178-412; sequence DTEKMIEQVR…PLIQEMLENS (235 aa). Positions 403–411 match the 9aaTAD motif; it reads PLIQEMLEN. A disordered region spans residues 411–458; the sequence is NSEGLEGGGSKGAGGGGGGGGGKGAPPGSCSPSLSPSSAHSSPSAHSP. A compositionally biased stretch (gly residues) spans 415-435; it reads LEGGGSKGAGGGGGGGGGKGA. The segment covering 436–458 has biased composition (low complexity); the sequence is PPGSCSPSLSPSSAHSSPSAHSP.

The protein belongs to the nuclear hormone receptor family. NR1 subfamily. As to quaternary structure, heterodimer; with an rxr molecule. Binds DNA preferentially as a rar/rxr heterodimer. As to expression, in the embryo, zygotic expression largely overlaps that of raraa, with high levels in hindbrain, lateral plate mesoderm (LPM) and tail bud, but in later stages rarab is expressed more broadly in the brain, pectoral fin bud and pharyngeal arches.

It localises to the nucleus. Functionally, receptor for retinoic acid. Retinoic acid receptors bind as heterodimers to their target response elements in response to their ligands, all-trans or 9-cis retinoic acid, and regulate gene expression in various biological processes. The rar/rxr heterodimers bind to the retinoic acid response elements (RARE) composed of tandem 5'-AGGTCA-3' sites known as DR1-DR5. Required for hindbrain development and, in lateral plate mesoderm, for specification of the pectoral fins. The chain is Retinoic acid receptor alpha-B from Danio rerio (Zebrafish).